The following is a 342-amino-acid chain: DNA primase small subunit PriS (342 aa).

Active-site residues include aspartate 97, aspartate 99, and aspartate 276.

Belongs to the eukaryotic-type primase small subunit family. In terms of assembly, heterodimer of a small subunit (PriS) and a large subunit (PriL). Mg(2+) is required as a cofactor. Mn(2+) serves as cofactor.

Its function is as follows. Catalytic subunit of DNA primase, an RNA polymerase that catalyzes the synthesis of short RNA molecules used as primers for DNA polymerase during DNA replication. The small subunit contains the primase catalytic core and has DNA synthesis activity on its own. Binding to the large subunit stabilizes and modulates the activity, increasing the rate of DNA synthesis while decreasing the length of the DNA fragments, and conferring RNA synthesis capability. The DNA polymerase activity may enable DNA primase to also catalyze primer extension after primer synthesis. May also play a role in DNA repair. The chain is DNA primase small subunit PriS from Thermococcus sibiricus (strain DSM 12597 / MM 739).